The chain runs to 287 residues: Lipoyl synthase (287 aa).

The [4Fe-4S] cluster site is built by C34, C39, C45, C60, C64, C67, and S273. Positions 46-262 (WNKRHATVMI…KYIAYSKGFL (217 aa)) constitute a Radical SAM core domain.

Belongs to the radical SAM superfamily. Lipoyl synthase family. [4Fe-4S] cluster is required as a cofactor.

It is found in the cytoplasm. The enzyme catalyses [[Fe-S] cluster scaffold protein carrying a second [4Fe-4S](2+) cluster] + N(6)-octanoyl-L-lysyl-[protein] + 2 oxidized [2Fe-2S]-[ferredoxin] + 2 S-adenosyl-L-methionine + 4 H(+) = [[Fe-S] cluster scaffold protein] + N(6)-[(R)-dihydrolipoyl]-L-lysyl-[protein] + 4 Fe(3+) + 2 hydrogen sulfide + 2 5'-deoxyadenosine + 2 L-methionine + 2 reduced [2Fe-2S]-[ferredoxin]. The protein operates within protein modification; protein lipoylation via endogenous pathway; protein N(6)-(lipoyl)lysine from octanoyl-[acyl-carrier-protein]: step 2/2. In terms of biological role, catalyzes the radical-mediated insertion of two sulfur atoms into the C-6 and C-8 positions of the octanoyl moiety bound to the lipoyl domains of lipoate-dependent enzymes, thereby converting the octanoylated domains into lipoylated derivatives. The sequence is that of Lipoyl synthase from Wolbachia sp. subsp. Brugia malayi (strain TRS).